The primary structure comprises 416 residues: E3 ubiquitin-protein ligase makorin-2 (416 aa).

2 consecutive C3H1-type zinc fingers follow at residues 2–29 (STKQVTCRYFMHGVCREGSQCLFSHDLA) and 31–58 (SKPSTICKYYQKGYCAYGARCRYDHTKP). The interval 61-144 (AAGGAVGPAP…DPQTSPEMKP (84 aa)) is disordered. The segment covering 95-123 (HSNEPGKREKKTLVLRDRNLTGLAEDKTP) has biased composition (basic and acidic residues). A Phosphoserine modification is found at Ser139. The segment at 165–192 (SNEPQLCPYAAAGECRFGDACVYLHGDM) adopts a C3H1-type 3 zinc-finger fold. Residues 193–222 (CEICRLQVLHPFDPEQRKAHEKMCMSTFEH) form a makorin-type Cys-His region. Residues 238 to 292 (CSICMEVILEKASASERRFGILSNCSHTYCLSCIRQWRCAKQFENPIIKSCPECR) form an RING-type zinc finger. The segment at 321–350 (GMGKKACKYFEQGKGTCPFGSKCLYRHAYP) adopts a C3H1-type 4 zinc-finger fold.

Interacts with PDLIM2 (via LIM zinc-binding domain). Interacts with RELA. In terms of tissue distribution, highly expressed in the testis, and lower expression in the brain, thymus, heart, lung, liver, spleen, kidney, ovary, uterus, and seminal vesicle (at protein level). Expressed in primary immune cells, such as CD4-positive and CD8-positive T cells, CD19-positive B cells and CD11c-positive dendritic cells, and in embryonic fibroblasts (at protein level).

It is found in the cytoplasm. It localises to the nucleus. It carries out the reaction S-ubiquitinyl-[E2 ubiquitin-conjugating enzyme]-L-cysteine + [acceptor protein]-L-lysine = [E2 ubiquitin-conjugating enzyme]-L-cysteine + N(6)-ubiquitinyl-[acceptor protein]-L-lysine.. It participates in protein modification; protein ubiquitination. E3 ubiquitin ligase catalyzing the covalent attachment of ubiquitin moieties onto substrate proteins. Promotes the polyubiquitination and proteasome-dependent degradation of RELA/p65, thereby suppressing RELA-mediated NF-kappa-B transactivation and negatively regulating inflammatory responses. Plays a role in the regulation of spermiation and in male fertility. In Mus musculus (Mouse), this protein is E3 ubiquitin-protein ligase makorin-2 (Mkrn2).